Here is a 1577-residue protein sequence, read N- to C-terminus: MAP kinase-activating death domain protein (1577 aa).

The 255-residue stretch at 13-267 folds into the uDENN domain; that stretch reads YLVIVGARHP…VPVSGQKRVD (255 aa). A compositionally biased stretch (basic and acidic residues) spans 106–121; that stretch reads KEKVEGGAGPRGKEGA. Positions 106–166 are disordered; that stretch reads KEKVEGGAGP…WGKRRAKAGS (61 aa). Residues 123–140 show a composition bias toward low complexity; the sequence is TSGASEEAATGSSESGST. Residues 141-156 show a composition bias toward polar residues; it reads LQPPSADSTPDINQSP. The residue at position 155 (Ser-155) is a Phosphoserine. The 141-residue stretch at 288–428 folds into the cDENN domain; it reads RFTLVDFPLH…ESLELKKHLK (141 aa). A dDENN domain is found at 430 to 564; the sequence is ALASMSLNTQ…LNPSNYAFQR (135 aa). Disordered regions lie at residues 604-635 and 676-840; these read LSVP…SSYS and QPQK…NSTE. Residues 614–629 are compositionally biased toward acidic residues; it reads SDPTEDSGSDSQDYDD. A phosphoserine mark is found at Ser-688 and Ser-691. Positions 688–698 are enriched in polar residues; sequence SENSQENPPLR. Over residues 699-715 the composition is skewed to low complexity; sequence SSSSTTASSSPSTVVHS. Residues 793-803 are compositionally biased toward polar residues; that stretch reads PRFSQHVSGSR. A phosphoserine mark is found at Ser-812, Ser-817, and Ser-819. Residues 826–839 show a composition bias toward low complexity; sequence RASSPNSTVSNNST. Ser-857, Ser-861, Ser-915, Ser-920, Ser-929, and Ser-1058 each carry phosphoserine. Disordered stretches follow at residues 912–940, 1050–1109, and 1127–1272; these read QKSS…SSEN, KEPD…DTRS, and EVKK…RSSE. Over residues 928–938 the composition is skewed to low complexity; the sequence is SSPQGRSSNSS. Phosphothreonine is present on residues Thr-1060 and Thr-1065. The residue at position 1109 (Ser-1109) is a Phosphoserine. The span at 1127 to 1141 shows a compositional bias: basic and acidic residues; it reads EVKKQKALEKQRPEG. Polar residues predominate over residues 1157-1172; that stretch reads QMSADSGVSLTSASQR. The span at 1189–1203 shows a compositional bias: low complexity; it reads SSSQDSEVSTVSNSS. Polar residues predominate over residues 1232–1248; the sequence is SRATLSDSEIETNSATS. Thr-1235 is subject to Phosphothreonine. Ser-1237 and Ser-1266 each carry phosphoserine. Positions 1336 to 1411 constitute a Death domain; sequence GMDQGPQEMI…GLVYSQQVNE (76 aa).

Belongs to the MADD family. Interacts (via death domain) with TNFRSF1A (via death domain). Interacts with PIDD1. Interacts with YWHAZ. Interacts (via death domain) with KIF1B; links the motor KIF1B to Rab3-carrying vesicles in anterograde synaptic vesicle transport. Interacts with KIF1A. Interacts (via uDENN domain) with RAB3A, RAB3B, RAB3C and RAB3D; the GTP-bound form of the Rab proteins is preferred for interaction. Expressed in the brain.

Its subcellular location is the cell membrane. The protein resides in the cytoplasm. It localises to the cell projection. The protein localises to the axon. Its function is as follows. Guanyl-nucleotide exchange factor that regulates small GTPases of the Rab family. Converts GDP-bound inactive form of RAB27A and RAB27B to the GTP-bound active forms. Converts GDP-bound inactive form of RAB3A, RAB3C and RAB3D to the GTP-bound active forms, GTPases involved in synaptic vesicle exocytosis and vesicle secretion. Plays a role in synaptic vesicle formation and in vesicle trafficking at the neuromuscular junction. Involved in up-regulating a post-docking step of synaptic exocytosis in central synapses. Probably by binding to the motor proteins KIF1B and KIF1A, mediates motor-dependent transport of GTP-RAB3A-positive vesicles to the presynaptic nerve terminals. Plays a role in TNFA-mediated activation of the MAPK pathway, including ERK1/2. May link TNFRSF1A with MAP kinase activation. May be involved in the regulation of TNFA-induced apoptosis. The sequence is that of MAP kinase-activating death domain protein from Mus musculus (Mouse).